We begin with the raw amino-acid sequence, 211 residues long: Calaxin (211 aa).

EF-hand domains follow at residues 64 to 99, 100 to 135, and 145 to 180; these read TDDM…FLRG, SLEE…SLLK, and GIKD…ETLL. Positions 77, 79, 81, 83, 88, 113, 115, 117, 124, 158, 160, 162, 164, and 169 each coordinate Ca(2+).

As to quaternary structure, component of the outer dynein arm-docking complex along with ODAD1, ODAD2, ODAD3 and ODAD4. As to expression, strong expression in the respiratory epithelium. Expressed in the sperm.

The protein resides in the cytoplasm. Its subcellular location is the cytoskeleton. The protein localises to the cilium axoneme. It is found in the cell projection. It localises to the cilium. The protein resides in the flagellum. Its function is as follows. Component of the outer dynein arm-docking complex (ODA-DC) that mediates outer dynein arms (ODA) binding onto the doublet microtubule. Seems to regulate the assembly of both ODAs and their axonemal docking complex onto ciliary microtubules. Regulates ciliary and flagellar motility and is required for cilia-driven determination of body laterality. This Homo sapiens (Human) protein is Calaxin.